The primary structure comprises 1153 residues: Error-prone DNA polymerase (1153 aa).

Residues 1107 to 1153 (DELIAPSASTEREAPLNDDRRDHPDLPAQQIRHPRNVRILPPSRDFH) are disordered. A compositionally biased stretch (basic and acidic residues) spans 1116-1131 (TEREAPLNDDRRDHPD).

The protein belongs to the DNA polymerase type-C family. DnaE2 subfamily.

The protein resides in the cytoplasm. The enzyme catalyses DNA(n) + a 2'-deoxyribonucleoside 5'-triphosphate = DNA(n+1) + diphosphate. Functionally, DNA polymerase involved in damage-induced mutagenesis and translesion synthesis (TLS). It is not the major replicative DNA polymerase. This Rhodopseudomonas palustris (strain BisA53) protein is Error-prone DNA polymerase.